Consider the following 84-residue polypeptide: MKTLLLTLVVVTIVCLDLGYTRKCLNTPLPLIYTTCPIGQDKCVKMTIKKLPSKYDVIRGCTDICPKSSADVVVVCCDTNKCNK.

Residues 1–21 (MKTLLLTLVVVTIVCLDLGYT) form the signal peptide. 4 cysteine pairs are disulfide-bonded: C24-C43, C36-C61, C65-C76, and C77-C82.

The protein belongs to the three-finger toxin family. Short-chain subfamily. Aminergic toxin sub-subfamily. As to expression, expressed by the venom gland.

It localises to the secreted. In terms of biological role, acts as a beta-blocker by binding to beta-1 and beta-2 adrenergic receptors (ADRB1 and ADRB2). It dose-dependently decreases the heart rate (bradycardia), whereas conventional cardiotoxins increases it. At 100 mg/kg, intraperitoneal injection into mice provokes labored breathing, impaired locomotion, lack of response to external stimuli, and death (after 30 minutes). The protein is Beta-cardiotoxin CTX21 of Ophiophagus hannah (King cobra).